A 101-amino-acid polypeptide reads, in one-letter code: Urease subunit beta (101 aa).

The protein belongs to the urease beta subunit family. As to quaternary structure, heterotrimer of UreA (gamma), UreB (beta) and UreC (alpha) subunits. Three heterotrimers associate to form the active enzyme.

It is found in the cytoplasm. It carries out the reaction urea + 2 H2O + H(+) = hydrogencarbonate + 2 NH4(+). The protein operates within nitrogen metabolism; urea degradation; CO(2) and NH(3) from urea (urease route): step 1/1. The chain is Urease subunit beta from Bradyrhizobium sp. (strain BTAi1 / ATCC BAA-1182).